A 45-amino-acid chain; its full sequence is Large ribosomal subunit protein bL34 (45 aa).

This sequence belongs to the bacterial ribosomal protein bL34 family.

This is Large ribosomal subunit protein bL34 from Clavibacter michiganensis subsp. michiganensis (strain NCPPB 382).